Reading from the N-terminus, the 946-residue chain is Protein translocase subunit SecA (946 aa).

ATP-binding positions include Q89, G107–T111, and D508. The interval P534 to S569 is disordered. The span at R546–S569 shows a compositional bias: basic and acidic residues.

The protein belongs to the SecA family. In terms of assembly, monomer and homodimer. Part of the essential Sec protein translocation apparatus which comprises SecA, SecYEG and auxiliary proteins SecDF. Other proteins may also be involved.

It is found in the cell inner membrane. Its subcellular location is the cellular thylakoid membrane. The protein resides in the cytoplasm. The enzyme catalyses ATP + H2O + cellular proteinSide 1 = ADP + phosphate + cellular proteinSide 2.. Its function is as follows. Part of the Sec protein translocase complex. Interacts with the SecYEG preprotein conducting channel. Has a central role in coupling the hydrolysis of ATP to the transfer of proteins into and across the cell membrane, serving as an ATP-driven molecular motor driving the stepwise translocation of polypeptide chains across the membrane. In terms of biological role, probably participates in protein translocation into and across both the cytoplasmic and thylakoid membranes in cyanobacterial cells. This is Protein translocase subunit SecA from Prochlorococcus marinus (strain SARG / CCMP1375 / SS120).